The chain runs to 1341 residues: DNA-directed RNA polymerase subunit beta (1341 aa).

The protein belongs to the RNA polymerase beta chain family. As to quaternary structure, the RNAP catalytic core consists of 2 alpha, 1 beta, 1 beta' and 1 omega subunit. When a sigma factor is associated with the core the holoenzyme is formed, which can initiate transcription.

The catalysed reaction is RNA(n) + a ribonucleoside 5'-triphosphate = RNA(n+1) + diphosphate. DNA-dependent RNA polymerase catalyzes the transcription of DNA into RNA using the four ribonucleoside triphosphates as substrates. In Photobacterium profundum (strain SS9), this protein is DNA-directed RNA polymerase subunit beta.